The chain runs to 208 residues: Coat protein (208 aa).

Belongs to the potexvirus capsid protein family.

It is found in the virion. Its function is as follows. Required for genome encapsidation. Forms ribonucleoprotein complexes along with TGB1 helicase and viral RNA. This is Coat protein from Trifolium (WCMV).